A 152-amino-acid chain; its full sequence is SsrA-binding protein (152 aa).

Belongs to the SmpB family.

The protein resides in the cytoplasm. Functionally, required for rescue of stalled ribosomes mediated by trans-translation. Binds to transfer-messenger RNA (tmRNA), required for stable association of tmRNA with ribosomes. tmRNA and SmpB together mimic tRNA shape, replacing the anticodon stem-loop with SmpB. tmRNA is encoded by the ssrA gene; the 2 termini fold to resemble tRNA(Ala) and it encodes a 'tag peptide', a short internal open reading frame. During trans-translation Ala-aminoacylated tmRNA acts like a tRNA, entering the A-site of stalled ribosomes, displacing the stalled mRNA. The ribosome then switches to translate the ORF on the tmRNA; the nascent peptide is terminated with the 'tag peptide' encoded by the tmRNA and targeted for degradation. The ribosome is freed to recommence translation, which seems to be the essential function of trans-translation. This is SsrA-binding protein from Helicobacter pylori (strain Shi470).